Here is a 384-residue protein sequence, read N- to C-terminus: 8-amino-7-oxononanoate synthase (384 aa).

A substrate-binding site is contributed by Arg-21. Residue 108–109 (GF) coordinates pyridoxal 5'-phosphate. Residue His-133 coordinates substrate. Ser-179, His-207, and Thr-233 together coordinate pyridoxal 5'-phosphate. Lys-236 carries the N6-(pyridoxal phosphate)lysine modification. Thr-352 lines the substrate pocket.

This sequence belongs to the class-II pyridoxal-phosphate-dependent aminotransferase family. BioF subfamily. In terms of assembly, homodimer. Pyridoxal 5'-phosphate is required as a cofactor.

The catalysed reaction is 6-carboxyhexanoyl-[ACP] + L-alanine + H(+) = (8S)-8-amino-7-oxononanoate + holo-[ACP] + CO2. It participates in cofactor biosynthesis; biotin biosynthesis. In terms of biological role, catalyzes the decarboxylative condensation of pimeloyl-[acyl-carrier protein] and L-alanine to produce 8-amino-7-oxononanoate (AON), [acyl-carrier protein], and carbon dioxide. The protein is 8-amino-7-oxononanoate synthase of Escherichia coli O17:K52:H18 (strain UMN026 / ExPEC).